The primary structure comprises 549 residues: Glucose-6-phosphate isomerase (549 aa).

Lys-80, Lys-228, and Lys-234 each carry N6-acetyllysine. The active-site Proton donor is Glu-355. Active-site residues include His-386 and Lys-514.

The protein belongs to the GPI family.

It localises to the cytoplasm. The enzyme catalyses alpha-D-glucose 6-phosphate = beta-D-fructose 6-phosphate. It participates in carbohydrate biosynthesis; gluconeogenesis. The protein operates within carbohydrate degradation; glycolysis; D-glyceraldehyde 3-phosphate and glycerone phosphate from D-glucose: step 2/4. Its function is as follows. Catalyzes the reversible isomerization of glucose-6-phosphate to fructose-6-phosphate. This is Glucose-6-phosphate isomerase from Shigella flexneri serotype 5b (strain 8401).